The following is a 290-amino-acid chain: D-tagatose-1,6-bisphosphate aldolase subunit KbaY (290 aa).

Catalysis depends on Asp-82, which acts as the Proton donor. Zn(2+) is bound by residues His-83 and His-180. Dihydroxyacetone phosphate is bound at residue Gly-181. Position 208 (His-208) interacts with Zn(2+). Dihydroxyacetone phosphate contacts are provided by residues 209–211 (GAS) and 230–233 (NVAT).

It belongs to the class II fructose-bisphosphate aldolase family. TagBP aldolase KbaY subfamily. As to quaternary structure, homotetramer. Forms a complex with KbaZ. It depends on Zn(2+) as a cofactor.

The enzyme catalyses D-tagatofuranose 1,6-bisphosphate = D-glyceraldehyde 3-phosphate + dihydroxyacetone phosphate. The protein operates within carbohydrate metabolism; D-tagatose 6-phosphate degradation; D-glyceraldehyde 3-phosphate and glycerone phosphate from D-tagatose 6-phosphate: step 2/2. Catalytic subunit of the tagatose-1,6-bisphosphate aldolase KbaYZ, which catalyzes the reversible aldol condensation of dihydroxyacetone phosphate (DHAP or glycerone-phosphate) with glyceraldehyde 3-phosphate (G3P) to produce tagatose 1,6-bisphosphate (TBP). Requires KbaZ subunit for full activity and stability. The sequence is that of D-tagatose-1,6-bisphosphate aldolase subunit KbaY from Salmonella arizonae (strain ATCC BAA-731 / CDC346-86 / RSK2980).